The following is a 198-amino-acid chain: Imidazoleglycerol-phosphate dehydratase (198 aa).

It belongs to the imidazoleglycerol-phosphate dehydratase family.

It localises to the cytoplasm. The enzyme catalyses D-erythro-1-(imidazol-4-yl)glycerol 3-phosphate = 3-(imidazol-4-yl)-2-oxopropyl phosphate + H2O. It functions in the pathway amino-acid biosynthesis; L-histidine biosynthesis; L-histidine from 5-phospho-alpha-D-ribose 1-diphosphate: step 6/9. In Streptomyces griseus subsp. griseus (strain JCM 4626 / CBS 651.72 / NBRC 13350 / KCC S-0626 / ISP 5235), this protein is Imidazoleglycerol-phosphate dehydratase.